Consider the following 252-residue polypeptide: 5-oxoprolinase subunit A (252 aa).

This sequence belongs to the LamB/PxpA family. In terms of assembly, forms a complex composed of PxpA, PxpB and PxpC.

The enzyme catalyses 5-oxo-L-proline + ATP + 2 H2O = L-glutamate + ADP + phosphate + H(+). In terms of biological role, catalyzes the cleavage of 5-oxoproline to form L-glutamate coupled to the hydrolysis of ATP to ADP and inorganic phosphate. This chain is 5-oxoprolinase subunit A, found in Staphylococcus saprophyticus subsp. saprophyticus (strain ATCC 15305 / DSM 20229 / NCIMB 8711 / NCTC 7292 / S-41).